The following is a 210-amino-acid chain: 23.6 kDa heat shock protein, mitochondrial (210 aa).

Residues 1–31 constitute a mitochondrion transit peptide; it reads MASALALKRLLSSSIAPRSRSVLRPAVSSRL. Residues 100 to 210 enclose the sHSP domain; the sequence is MGASGARRGW…RNDVRQIEIN (111 aa). Residues 145–165 form a disordered region; that stretch reads GEGKNEEDGGEEGESGNRRFT.

The protein belongs to the small heat shock protein (HSP20) family. In terms of assembly, may form oligomeric structures.

The protein localises to the mitochondrion. In Arabidopsis thaliana (Mouse-ear cress), this protein is 23.6 kDa heat shock protein, mitochondrial (HSP23.6).